Reading from the N-terminus, the 449-residue chain is MRYLPLTEADRQAMLARIGVPDVDALFRDVPQAARLTAPIDGLPLHMGELEVDRLLSGMAAKNLTAGSVPSFLGAGAYRHHVPASVDQMLLRGEFLTSYTPYQPEVAQGTLQYLFEFQTQVAEITGMEVANASMYDGATGTAEAVLMATRLTRRSKAVLSGGLHPHYREVVATTCGVLGMEVAAQAPDPTDAEDLLPLVDDATACVVVQTPSLFGHPRDLSELAAACHAKGALLIAVVTEVVSLGLLTPPGRMGADIVVCEGQSIGNPLNFGGPHVGLFATREKFVRQMPGRLCGQTADAEGKRGFVLTLSTREQHIRREKATSNICTNSGLCALAFTIHMALLGGEGFARLARLNHAKAVTLADRLAAVPGVEVLNGAFFNEFTLRLPRPAAPVVEALAQRRILAGVPVSRLYPGEAGLETLLLVAATETNTEADMDALVHGLQEVLR.

The protein belongs to the GcvP family. N-terminal subunit subfamily. The glycine cleavage system is composed of four proteins: P, T, L and H. In this organism, the P 'protein' is a heterodimer of two subunits.

It catalyses the reaction N(6)-[(R)-lipoyl]-L-lysyl-[glycine-cleavage complex H protein] + glycine + H(+) = N(6)-[(R)-S(8)-aminomethyldihydrolipoyl]-L-lysyl-[glycine-cleavage complex H protein] + CO2. In terms of biological role, the glycine cleavage system catalyzes the degradation of glycine. The P protein binds the alpha-amino group of glycine through its pyridoxal phosphate cofactor; CO(2) is released and the remaining methylamine moiety is then transferred to the lipoamide cofactor of the H protein. This chain is Probable glycine dehydrogenase (decarboxylating) subunit 1, found in Rhodospirillum centenum (strain ATCC 51521 / SW).